Reading from the N-terminus, the 174-residue chain is UPF0340 protein SAB1998c (174 aa).

It belongs to the UPF0340 family.

The protein is UPF0340 protein SAB1998c of Staphylococcus aureus (strain bovine RF122 / ET3-1).